A 473-amino-acid polypeptide reads, in one-letter code: ATP synthase subunit beta (473 aa).

153 to 160 (GGAGVGKT) provides a ligand contact to ATP.

The protein belongs to the ATPase alpha/beta chains family. F-type ATPases have 2 components, CF(1) - the catalytic core - and CF(0) - the membrane proton channel. CF(1) has five subunits: alpha(3), beta(3), gamma(1), delta(1), epsilon(1). CF(0) has three main subunits: a(1), b(2) and c(9-12). The alpha and beta chains form an alternating ring which encloses part of the gamma chain. CF(1) is attached to CF(0) by a central stalk formed by the gamma and epsilon chains, while a peripheral stalk is formed by the delta and b chains.

Its subcellular location is the cell inner membrane. The enzyme catalyses ATP + H2O + 4 H(+)(in) = ADP + phosphate + 5 H(+)(out). In terms of biological role, produces ATP from ADP in the presence of a proton gradient across the membrane. The catalytic sites are hosted primarily by the beta subunits. The polypeptide is ATP synthase subunit beta (Rickettsia rickettsii (strain Iowa)).